The primary structure comprises 43 residues: MGFYNSGGYSGNSGYSNGFGSSFALIVVLFILLIIVGAAIFNY.

The helical transmembrane segment at 21–41 (SSFALIVVLFILLIIVGAAIF) threads the bilayer.

This sequence belongs to the SscA family.

It is found in the membrane. This is an uncharacterized protein from Bacillus subtilis (strain 168).